The chain runs to 1218 residues: Protein jagged-1 (1218 aa).

The first 33 residues, 1–33 (MRSPRTRGRPGRPLSLLLALLCALRAKVCGASG), serve as a signal peptide directing secretion. Topologically, residues 34–1067 (QFELEILSMQ…QRRPLKNRTD (1034 aa)) are extracellular. A glycan (N-linked (GlcNAc...) asparagine) is linked at Asn143. Positions 185 to 229 (VTCDDHYYGFGCNKFCRPRDDFFGHYACDQNGNKTCMEGWMGPDC) constitute a DSL domain. Disulfide bonds link Cys187–Cys196 and Cys200–Cys212. Positions 199–207 (FCRPRDDFF) are important for interaction with NOTCH1. A glycan (N-linked (GlcNAc...) asparagine) is linked at Asn217. 40 cysteine pairs are disulfide-bonded: Cys220–Cys229, Cys234–Cys245, Cys238–Cys251, Cys253–Cys262, Cys265–Cys276, Cys271–Cys282, Cys284–Cys293, Cys300–Cys312, Cys306–Cys322, Cys324–Cys333, Cys340–Cys351, Cys345–Cys360, Cys362–Cys371, Cys378–Cys389, Cys383–Cys398, Cys400–Cys409, Cys416–Cys427, Cys421–Cys436, Cys438–Cys447, Cys454–Cys464, Cys458–Cys473, Cys475–Cys484, Cys491–Cys502, Cys496–Cys511, Cys513–Cys522, Cys529–Cys540, Cys534–Cys549, Cys551–Cys560, Cys578–Cys605, Cys599–Cys615, Cys617–Cys626, Cys633–Cys644, Cys638–Cys653, Cys655–Cys664, Cys671–Cys682, Cys676–Cys691, Cys693–Cys702, Cys709–Cys720, Cys714–Cys729, and Cys731–Cys740. Residues 230–263 (NKAICRQGCSPKHGSCKLPGDCRCQYGWQGLYCD) enclose the EGF-like 1 domain. The 31-residue stretch at 264-294 (KCIPHPGCVHGTCNEPWQCLCETNWGGQLCD) folds into the EGF-like 2; atypical domain. EGF-like domains are found at residues 296 to 334 (DLNYCGTHQPCLNRGTCSNTGPDKYQCSCPEGYSGPNCE) and 336 to 372 (AEHACLSDPCHNRGSCKETSSGFECECSPGWTGPTCS). One can recognise an EGF-like 5; calcium-binding domain in the interval 374–410 (NIDDCSPNNCSHGGTCQDLVNGFKCVCPPQWTGKTCQ). A glycan (N-linked (GlcNAc...) asparagine) is linked at Asn382. The region spanning 412–448 (DANECEAKPCVNARSCKNLIASYYCDCLPGWMGQNCD) is the EGF-like 6; calcium-binding domain. One can recognise an EGF-like 7; calcium-binding domain in the interval 450 to 485 (NINDCLGQCQNDASCRDLVNGYRCICPPGYAGDHCE). One can recognise an EGF-like 8; calcium-binding domain in the interval 487 to 523 (DIDECASNPCLNGGHCQNEINRFQCLCPTGFSGNLCQ). 2 EGF-like domains span residues 525–561 (DIDYCEPNPCQNGAQCYNRASDYFCKCPEDYEGKNCS) and 586–627 (DTPE…TYCH). N-linked (GlcNAc...) asparagine glycosylation occurs at Asn559. One can recognise an EGF-like 11; calcium-binding domain in the interval 629-665 (NINDCESNPCKNGGTCIDGVNSYKCICSDGWEGAHCE). One can recognise an EGF-like 12; calcium-binding domain in the interval 667–703 (NINDCSQNPCHYGGTCRDLVNDFYCDCKNGWKGKTCH). EGF-like domains lie at 705 to 741 (RDSQCDEATCNNGGTCYDEVDTFKCMCPGGWEGTTCN) and 744 to 780 (RNSSCLPNPCHNGGTCVVNGDSFTCVCKEGWEGPICT). Residue Asn745 is glycosylated (N-linked (GlcNAc...) asparagine). 9 cysteine pairs are disulfide-bonded: Cys748–Cys759, Cys753–Cys768, Cys770–Cys779, Cys786–Cys797, Cys791–Cys806, Cys808–Cys817, Cys824–Cys835, Cys829–Cys844, and Cys846–Cys855. An EGF-like 15; calcium-binding domain is found at 782–818 (NTNDCSPHPCYNSGTCVDGDNWYRCECAPGFAGPDCR). The 37-residue stretch at 820–856 (NINECQSSPCAFGATCVDEINGYQCICPPGHSGAKCH) folds into the EGF-like 16; calcium-binding domain. Residues Asn960, Asn991, Asn1045, and Asn1064 are each glycosylated (N-linked (GlcNAc...) asparagine). A helical membrane pass occupies residues 1068–1093 (FLVPLLSSVLTVAWVCCLVTAFYWCV). At 1094 to 1218 (RKRRKPSSHT…QSLNRMEYIV (125 aa)) the chain is on the cytoplasmic side. The disordered stretch occupies residues 1181-1218 (REEKAPSGTPTKHPNWTNKQDNRDLESAQSLNRMEYIV). Polar residues predominate over residues 1188 to 1199 (GTPTKHPNWTNK).

As to quaternary structure, interacts with NOTCH1, NOTCH2 and NOTCH3. In terms of tissue distribution, widely expressed in many tissues, with highest expression in brain, heart, muscle and thymus.

The protein localises to the membrane. Its subcellular location is the cell membrane. In terms of biological role, ligand for multiple Notch receptors and involved in the mediation of Notch signaling. May be involved in cell-fate decisions during hematopoiesis. Seems to be involved in early and late stages of mammalian cardiovascular development. Inhibits myoblast differentiation. May regulate fibroblast growth factor-induced angiogenesis. In Mus musculus (Mouse), this protein is Protein jagged-1 (Jag1).